Consider the following 121-residue polypeptide: ATP synthase epsilon chain (121 aa).

It belongs to the ATPase epsilon chain family. F-type ATPases have 2 components, CF(1) - the catalytic core - and CF(0) - the membrane proton channel. CF(1) has five subunits: alpha(3), beta(3), gamma(1), delta(1), epsilon(1). CF(0) has three main subunits: a, b and c.

Its subcellular location is the cell membrane. Its function is as follows. Produces ATP from ADP in the presence of a proton gradient across the membrane. The protein is ATP synthase epsilon chain of Mycolicibacterium smegmatis (strain ATCC 700084 / mc(2)155) (Mycobacterium smegmatis).